We begin with the raw amino-acid sequence, 521 residues long: Ribonuclease Y (521 aa).

Residues 5 to 25 form a helical membrane-spanning segment; it reads LLLILTAVIMLIVGFAVGAIL. Residues 77 to 107 are disordered; that stretch reads ELKDRRGEVQKQENRLIQREETMDRKDATLD. One can recognise a KH domain in the interval 211–271; sequence TVTVVTLPND…IRREIARMTL (61 aa). In terms of domain architecture, HD spans 337–430; that stretch reads VLNHSIEVAK…VAASDAISAA (94 aa).

This sequence belongs to the RNase Y family.

The protein localises to the cell membrane. Functionally, endoribonuclease that initiates mRNA decay. The protein is Ribonuclease Y of Latilactobacillus sakei subsp. sakei (strain 23K) (Lactobacillus sakei subsp. sakei).